The primary structure comprises 114 residues: Nucleoid-associated protein Tlet_0999 (114 aa).

The protein belongs to the YbaB/EbfC family. In terms of assembly, homodimer.

It is found in the cytoplasm. Its subcellular location is the nucleoid. Functionally, binds to DNA and alters its conformation. May be involved in regulation of gene expression, nucleoid organization and DNA protection. This Pseudothermotoga lettingae (strain ATCC BAA-301 / DSM 14385 / NBRC 107922 / TMO) (Thermotoga lettingae) protein is Nucleoid-associated protein Tlet_0999.